We begin with the raw amino-acid sequence, 85 residues long: Large ribosomal subunit protein bL27 (85 aa).

Residues 1 to 21 (MAHKKAGGSTRNGRDSEGKRL) form a disordered region.

It belongs to the bacterial ribosomal protein bL27 family.

The chain is Large ribosomal subunit protein bL27 from Hamiltonella defensa subsp. Acyrthosiphon pisum (strain 5AT).